A 233-amino-acid chain; its full sequence is uncharacterized protein (233 aa).

Residues 21–41 (LNILIAIVSILIVVVAANLFI) traverse the membrane as a helical segment. Residues 44–163 (PSSKDVSKDS…GEHAATYDSS (120 aa)) form a disordered region. 3 stretches are compositionally biased toward basic and acidic residues: residues 48 to 57 (DVSKDSETAQ), 66 to 108 (KTEK…KKDD), and 135 to 144 (DVEKTYENPD).

The protein localises to the cell membrane. This is an uncharacterized protein from Bacillus subtilis (strain 168).